The chain runs to 407 residues: Peptidase T (407 aa).

Residue His-82 participates in Zn(2+) binding. Asp-84 is an active-site residue. Asp-143 contacts Zn(2+). Catalysis depends on Glu-177, which acts as the Proton acceptor. Zn(2+) contacts are provided by Glu-178, Asp-200, and His-382.

It belongs to the peptidase M20B family. It depends on Zn(2+) as a cofactor.

The protein localises to the cytoplasm. The catalysed reaction is Release of the N-terminal residue from a tripeptide.. Its function is as follows. Cleaves the N-terminal amino acid of tripeptides. The chain is Peptidase T from Streptococcus pyogenes serotype M28 (strain MGAS6180).